The primary structure comprises 400 residues: CCA-adding enzyme (400 aa).

Residues glycine 28 and arginine 31 each coordinate ATP. CTP contacts are provided by glycine 28 and arginine 31. Mg(2+) contacts are provided by aspartate 41 and aspartate 43. Residues arginine 112, aspartate 155, arginine 158, arginine 161, and arginine 164 each coordinate ATP. Arginine 112, aspartate 155, arginine 158, arginine 161, and arginine 164 together coordinate CTP.

The protein belongs to the tRNA nucleotidyltransferase/poly(A) polymerase family. Bacterial CCA-adding enzyme type 3 subfamily. In terms of assembly, homodimer. It depends on Mg(2+) as a cofactor.

The catalysed reaction is a tRNA precursor + 2 CTP + ATP = a tRNA with a 3' CCA end + 3 diphosphate. It carries out the reaction a tRNA with a 3' CCA end + 2 CTP + ATP = a tRNA with a 3' CCACCA end + 3 diphosphate. Functionally, catalyzes the addition and repair of the essential 3'-terminal CCA sequence in tRNAs without using a nucleic acid template. Adds these three nucleotides in the order of C, C, and A to the tRNA nucleotide-73, using CTP and ATP as substrates and producing inorganic pyrophosphate. tRNA 3'-terminal CCA addition is required both for tRNA processing and repair. Also involved in tRNA surveillance by mediating tandem CCA addition to generate a CCACCA at the 3' terminus of unstable tRNAs. While stable tRNAs receive only 3'-terminal CCA, unstable tRNAs are marked with CCACCA and rapidly degraded. This Staphylococcus epidermidis (strain ATCC 12228 / FDA PCI 1200) protein is CCA-adding enzyme.